The sequence spans 995 residues: DExH-box ATP-dependent RNA helicase DExH10 (995 aa).

Residues 1–42 (MSAQMEEPETLGKRKESESSKLRSDETPTPEPRTKRRSLKRA) form a disordered region. Ser-2 bears the N-acetylserine mark. Residues 10–26 (TLGKRKESESSKLRSDE) show a composition bias toward basic and acidic residues. The region spanning 90 to 246 (VACLERKESI…WICYLHKQPC (157 aa)) is the Helicase ATP-binding domain. 103–110 (AHTSAGKT) lines the ATP pocket. A DEIH box motif is present at residues 194-197 (DEIH). The tract at residues 290 to 318 (DTFPKPKSNDGKKSANGKSGGRGAKGGGG) is disordered. Positions 307–318 (KSGGRGAKGGGG) are enriched in gly residues. In terms of domain architecture, Helicase C-terminal spans 323–524 (DVYKIVKMIM…LSYYTILNLL (202 aa)).

This sequence belongs to the DExH box helicase family. SKI2 subfamily. As to expression, expressed in inflorescences, leaves, stems, and roots.

The protein localises to the nucleus. Its subcellular location is the nucleoplasm. The catalysed reaction is ATP + H2O = ADP + phosphate + H(+). Its function is as follows. ATP-dependent RNA helicase that associates with the RNA exosome complex, with the cap binding complex (CBC) and with the NEXT-like complex. Involved in the degradation of a large number of non-coding nuclear exosome substrates such as snoRNA and miRNA precursors, incompletely spliced mRNAs, and spurious transcripts produced from pseudogenes and intergenic regions. Involved in the maintenance of homeotic B and C gene expression in the reproductive whorls. Regulates floral organ spacing and identity, probably through the regulation of protein synthesis or mRNA degradation. The polypeptide is DExH-box ATP-dependent RNA helicase DExH10 (Arabidopsis thaliana (Mouse-ear cress)).